Reading from the N-terminus, the 102-residue chain is Probable endoribonuclease MazF2 (102 aa).

The protein belongs to the PemK/MazF family. In terms of assembly, forms a complex with cognate antitoxin MazE2.

Toxic component of a type II toxin-antitoxin (TA) system. Acts as an endoribonuclease. Neutralized by coexpression with cognate antitoxin MazE2. In Mycobacterium tuberculosis (strain CDC 1551 / Oshkosh), this protein is Probable endoribonuclease MazF2 (mazF2).